Here is a 223-residue protein sequence, read N- to C-terminus: UPF0441 protein YgiB (223 aa).

Over residues 178-195 (TVPKTAMAPKPATTTTVT) the composition is skewed to low complexity. Positions 178-223 (TVPKTAMAPKPATTTTVTRGGFGESVAKQSTMQRSAAGTSTRSMGG) are disordered. Positions 204-223 (AKQSTMQRSAAGTSTRSMGG) are enriched in polar residues.

This sequence belongs to the UPF0441 family.

In Salmonella paratyphi A (strain ATCC 9150 / SARB42), this protein is UPF0441 protein YgiB.